The primary structure comprises 327 residues: Methionyl-tRNA formyltransferase (327 aa).

122–125 (SLLP) contributes to the (6S)-5,6,7,8-tetrahydrofolate binding site.

Belongs to the Fmt family.

The catalysed reaction is L-methionyl-tRNA(fMet) + (6R)-10-formyltetrahydrofolate = N-formyl-L-methionyl-tRNA(fMet) + (6S)-5,6,7,8-tetrahydrofolate + H(+). Its function is as follows. Attaches a formyl group to the free amino group of methionyl-tRNA(fMet). The formyl group appears to play a dual role in the initiator identity of N-formylmethionyl-tRNA by promoting its recognition by IF2 and preventing the misappropriation of this tRNA by the elongation apparatus. This Ralstonia nicotianae (strain ATCC BAA-1114 / GMI1000) (Ralstonia solanacearum) protein is Methionyl-tRNA formyltransferase.